Reading from the N-terminus, the 202-residue chain is Cytochrome c biogenesis ATP-binding export protein CcmA (202 aa).

The region spanning 3–200 is the ABC transporter domain; it reads LAAENLSGER…EGTQELKMGA (198 aa). 35 to 42 is a binding site for ATP; the sequence is GPNGAGKS.

This sequence belongs to the ABC transporter superfamily. CcmA exporter (TC 3.A.1.107) family. The complex is composed of two ATP-binding proteins (CcmA) and two transmembrane proteins (CcmB).

The protein localises to the cell inner membrane. The enzyme catalyses heme b(in) + ATP + H2O = heme b(out) + ADP + phosphate + H(+). Functionally, part of the ABC transporter complex CcmAB involved in the biogenesis of c-type cytochromes; once thought to export heme, this seems not to be the case, but its exact role is uncertain. Responsible for energy coupling to the transport system. The sequence is that of Cytochrome c biogenesis ATP-binding export protein CcmA from Chelativorans sp. (strain BNC1).